Here is a 119-residue protein sequence, read N- to C-terminus: Protein SPIRAL1 (119 aa).

Gly residues predominate over residues 1–11 (MGRGNSCGGGQ). Disordered regions lie at residues 1–47 (MGRG…PPVT) and 85–105 (EGQNTGNFLTDRPSTKVHAAP). Over residues 24–34 (APKPVPAPRPA) the composition is skewed to pro residues.

It belongs to the SPIRAL1 family. Ubiquitinated. Upon salt-stress induction, it is subject to proteasome-dependent degradation. Ubiquitous. High expression was associated with tissues undergoing rapid cell expansion, including the root elongation zone, hypocotyls of dark grown-seedlings, and cotyledons of light-grown seedlings.

It is found in the cytoplasm. Its subcellular location is the cytoskeleton. It localises to the phragmoplast. The protein localises to the spindle. Functionally, required for directional control of cell elongation. Stabilizes growing ends of cortical microtubules and influences their dynamic properties. Acts redundantly with SP1Ls in maintaining the cortical microtubules organization essential for anisotropic cell growth. Plays a key role in salt stress-induced microtubules disassembly. The sequence is that of Protein SPIRAL1 (SPR1) from Arabidopsis thaliana (Mouse-ear cress).